A 161-amino-acid polypeptide reads, in one-letter code: Phosphopantetheine adenylyltransferase (161 aa).

Thr10 contributes to the substrate binding site. Residues 10 to 11 (TF) and His18 contribute to the ATP site. Lys42, Met74, and Arg88 together coordinate substrate. Residues 89–91 (GLR), Glu99, and 124–130 (WSFISSS) contribute to the ATP site.

The protein belongs to the bacterial CoaD family. Homohexamer. Mg(2+) serves as cofactor.

The protein resides in the cytoplasm. It catalyses the reaction (R)-4'-phosphopantetheine + ATP + H(+) = 3'-dephospho-CoA + diphosphate. Its pathway is cofactor biosynthesis; coenzyme A biosynthesis; CoA from (R)-pantothenate: step 4/5. Reversibly transfers an adenylyl group from ATP to 4'-phosphopantetheine, yielding dephospho-CoA (dPCoA) and pyrophosphate. This is Phosphopantetheine adenylyltransferase from Serratia marcescens.